A 1706-amino-acid chain; its full sequence is MSTSQTLGGATRCGRIIGPSLDKIIKNAAWRKHTYLVSSCKSVLDKLESLPDDFHDPSSVVSGLAASDADSVLQPFLLSLETAYSKVVEPSLDCAFKLFSLSILRGEIQSSKQDSILFKLVNAVSKVGAIAEEPIQLAVLRVLLAAVRSPCILIRGDCLLHVVKTCYNIYLGGLSGTTQICAKSVLAQMMLVIFTRSEEDSLDVSVKTIYVNELLTFTDKSVNEGSSVYFCQGFVNEVMAAGQGSPLPPPDVIQILLQNPETETVMTPDSPSFRGYVANGEGDSETGDMSKVRQDAFLLFKNLCKLSMRFSSKENNDDQIMVRGKTLSLELLKVIIDNGGSVWRTNESFINAVKQYLCLSLLKNSAVSIMSIFQLQCAIFMSLLSKLRSVLKAEIGIFFPMIVLRVLENVLQPSYLQKMTVLNLLDKMSQDPQLMVDIFVNYDCDVESSNILERIVNGLLKTALGPPTGSSTTLSPAQDSTFRNDSVKCLVNLAKAMGNWMDQQLKVNETVWPKGSQVYASMDSNASQISELEGTISDCDSQPDTSNPEAYDASMLEQRRAYKIELQKGISLFNRKPSKGVEFLISTKKIGSSPEEVASFLMKTAGLNGTVIGDYLGERDELPLKVMHAYVDSFNFEKKDFVEAIRFFLRGFRLPGEAQKIDRIMEKFAEHYWKCNPGSFTSADTAYVLAYSVIMLNTDAHNNMVKDKMTKADFVRNNRGIDDGKDLPEEYLGSLYDRVVKEEIRMNSDTLAPQNKQVNGLNKLLGLDGILNLVSWMQPDEKPHGANGRLIRDIQEQFQAKPEKSESVYHTVTDISILRFILEVSWGPMLAAFSVTIDQSDDRLATSLCLQGFRYAVHVTAVMGMQTQRDAFVTSMAKFTNLHCAADMKQKNVDAVKAIITIAIEDGNHLHGSWEHILTCLSRIEHLQLLGEVSPSEKRYVPTKKAEVDDKKALGFPNLKKRGSFQNPSVMAVVRGGSYDSTSLVKSVPKLVTPEQIKSFIANLNLLDQIGNFELNHVYANSQRLNSEAIVSFVKALCKVSMSELQSPTDPRVFSLTKLVETAHYNMNRIRLVWSRIWNVLSDFFVSVGLSENLSVAIFVMDSLRQLSMKFLEREELANYHFQHEFLRPFVVVMQKSSSAEIRELIVRCVSQMVLSRVSNVKSGWKNVFTVFTTAALDERKNIVLLAFETIEKIVRDHFHCIIETEITVYADCIRCLITFTNSKFEGDIGFNTIEFLRFCALKLEEGGLVLNEKLKNNTISALKEDFSDTQSFTDLDEQVSYWIPLLTGLCKQVSDPRPAIRKRSIEVLFHILMDHGHLFTRPFWTGIFSSIILPVFNNIRSKTDMLFEESVDSPSSASLDTEETTWDVETSTLALQLLVDLLVKFFRSVRSQLPSVVSIIVGFIKSPFQGSTGSGISVLLHLADGLARSASEDEWREIFLALKEAASLTFAGFMKVLRTMDDIEDVETLSGQSVNIGDLDDDSLHIMSYVVSRTKKHIDVLSQIVEVVSDLYRRNQFSLSASHVDILADIFSCIASHAQQLNTDTVLRRKFKRACSVQNLTEPQLLNFENEAYKSYMMFLQDMVTCNPNVSKELDLESRLVTECAKIVKIYLKCTDPQQQEQQQRKPVLWVLPMESDRVEEATARTSLLVSSLEALCSLEAESLKKHVSSFFPLLVDLVRTEHCSPQVPYVLSNVLKSCIGPILA.

The region spanning 555 to 742 (MLEQRRAYKI…GSLYDRVVKE (188 aa)) is the SEC7 domain. Glu-657 is a catalytic residue.

As to quaternary structure, homodimer.

The protein resides in the cytoplasm. Its subcellular location is the cytosol. It localises to the membrane. Its activity is regulated as follows. Inhibited by brefeldin A. In terms of biological role, activates the ARF proteins by exchanging bound GDP for free GTP. Plays a role in vesicular protein sorting. In Arabidopsis thaliana (Mouse-ear cress), this protein is Brefeldin A-inhibited guanine nucleotide-exchange protein 4 (BIG4).